Consider the following 5635-residue polypeptide: MISWEVVHTVFLFALLYSSLAQDASPQSEIRAEEIPEGASTLAFVFDVTGSMYDDLVQVIEGASKILETSLKRPKRPLFNFALVPFHDPEIGPVTITTDPKKFQYELRELYVQGGGDCPEMSIGAIKIALEISLPGSFIYVFTDARSKDYRLTHEVLQLIQQKQSQVVFVLTGDCDDRTHIGYKVYEEIASTSSGQVFHLDKKQVNEVLKWVEEAVQASKVHLLSTDHLEQAVNTWRIPFDPSLKEVTVSLSGPSPMIEIRNPLGKLIKKGFGLHELLNIHNSAKVVNVKEPEAGMWTVKTSSSGRHSVRITGLSTIDFRAGFSRKPTLDFKKTVSRPVQGIPTYVLLNTSGISTPARIDLLELLSISGSSLKTIPVKYYPHRKPYGIWNISDFVPPNEAFFLKVTGYDKDDYLFQRVSSVSFSSIVPDAPKVTMPEKTPGYYLQPGQIPCSVDSLLPFTLSFVRNGVTLGVDQYLKESASVNLDIAKVTLSDEGFYECIAVSSAGTGRAQTFFDVSEPPPVIQVPNNVTVTPGERAVLTCLIISAVDYNLTWQRNDRDVRLAEPARIRTLANLSLELKSVKFNDAGEYHCMVSSEGGSSAASVFLTVQEPPKVTVMPKNQSFTGGSEVSIMCSATGYPKPKIAWTVNDMFIVGSHRYRMTSDGTLFIKNAAPKDAGIYGCLASNSAGTDKQNSTLRYIEAPKLMVVQSELLVALGDITVMECKTSGIPPPQVKWFKGDLELRPSTFLIIDPLLGLLKIQETQDLDAGDYTCVAINEAGRATGKITLDVGSPPVFIQEPADVSMEIGSNVTLPCYVQGYPEPTIKWRRLDNMPIFSRPFSVSSISQLRTGALFILNLWASDKGTYICEAENQFGKIQSETTVTVTGLVAPLIGISPSVANVIEGQQLTLPCTLLAGNPIPERRWIKNSAMLLQNPYITVRSDGSLHIERVQLQDGGEYTCVASNVAGTNNKTTSVVVHVLPTIQHGQQILSTIEGIPVTLPCKASGNPKPSVIWSKKGELISTSSAKFSAGADGSLYVVSPGGEESGEYVCTATNTAGYAKRKVQLTVYVRPRVFGDQRGLSQDKPVEISVLAGEEVTLPCEVKSLPPPIITWAKETQLISPFSPRHTFLPSGSMKITETRTSDSGMYLCVATNIAGNVTQAVKLNVHVPPKIQRGPKHLKVQVGQRVDIPCNAQGTPLPVITWSKGGSTMLVDGEHHVSNPDGTLSIDQATPSDAGIYTCVATNIAGTDETEITLHVQEPPTVEDLEPPYNTTFQERVANQRIEFPCPAKGTPKPTIKWLHNGRELTGREPGISILEDGTLLVIASVTPYDNGEYICVAVNEAGTTERKYNLKVHVPPVIKDKEQVTNVSVLLNQLTNLFCEVEGTPSPIIMWYKDNVQVTESSTIQTVNNGKILKLFRATPEDAGRYSCKAINIAGTSQKYFNIDVLVPPTIIGTNFPNEVSVVLNRDVALECQVKGTPFPDIHWFKDGKPLFLGDPNVELLDRGQVLHLKNARRNDKGRYQCTVSNAAGKQAKDIKLTIYIPPSIKGGNVTTDISVLINSLIKLECETRGLPMPAITWYKDGQPIMSSSQALYIDKGQYLHIPRAQVSDSATYTCHVANVAGTAEKSFHVDVYVPPMIEGNLATPLNKQVVIAHSLTLECKAAGNPSPILTWLKDGVPVKANDNIRIEAGGKKLEIMSAQEIDRGQYICVATSVAGEKEIKYEVDVLVPPAIEGGDETSYFIVMVNNLLELDCHVTGSPPPTIMWLKDGQLIDERDGFKILLNGRKLVIAQAQVSNTGLYRCMAANTAGDHKKEFEVTVHVPPTIKSSGLSERVVVKYKPVALQCIANGIPNPSITWLKDDQPVNTAQGNLKIQSSGRVLQIAKTLLEDAGRYTCVATNAAGETQQHIQLHVHEPPSLEDAGKMLNETVLVSNPVQLECKAAGNPVPVITWYKDNRLLSGSTSMTFLNRGQIIDIESAQISDAGIYKCVAINSAGATELFYSLQVHVAPSISGSNNMVAVVVNNPVRLECEARGIPAPSLTWLKDGSPVSSFSNGLQVLSGGRILALTSAQISDTGRYTCVAVNAAGEKQRDIDLRVYVPPNIMGEEQNVSVLISQAVELLCQSDAIPPPTLTWLKDGHPLLKKPGLSISENRSVLKIEDAQVQDTGRYTCEATNVAGKTEKNYNVNIWVPPNIGGSDELTQLTVIEGNLISLLCESSGIPPPNLIWKKKGSPVLTDSMGRVRILSGGRQLQISIAEKSDAALYSCVASNVAGTAKKEYNLQVYIRPTITNSGSHPTEIIVTRGKSISLECEVQGIPPPTVTWMKDGHPLIKAKGVEILDEGHILQLKNIHVSDTGRYVCVAVNVAGMTDKKYDLSVHAPPSIIGNHRSPENISVVEKNSVSLTCEASGIPLPSITWFKDGWPVSLSNSVRILSGGRMLRLMQTTMEDAGQYTCVVRNAAGEERKIFGLSVLVPPHIVGENTLEDVKVKEKQSVTLTCEVTGNPVPEITWHKDGQPLQEDEAHHIISGGRFLQITNVQVPHTGRYTCLASSPAGHKSRSFSLNVFVSPTIAGVGSDGNPEDVTVILNSPTSLVCEAYSYPPATITWFKDGTPLESNRNIRILPGGRTLQILNAQEDNAGRYSCVATNEAGEMIKHYEVKVYIPPIINKGDLWGPGLSPKEVKIKVNNTLTLECEAYAIPSASLSWYKDGQPLKSDDHVNIAANGHTLQIKEAQISDTGRYTCVASNIAGEDELDFDVNIQVPPSFQKLWEIGNMLDTGRNGEAKDVIINNPISLYCETNAAPPPTLTWYKDGHPLTSSDKVLILPGGRVLQIPRAKVEDAGRYTCVAVNEAGEDSLQYDVRVLVPPIIKGANSDLPEEVTVLVNKSALIECLSSGSPAPRNSWQKDGQPLLEDDHHKFLSNGRILQILNTQITDIGRYVCVAENTAGSAKKYFNLNVHVPPSVIGPKSENLTVVVNNFISLTCEVSGFPPPDLSWLKNEQPIKLNTNTLIVPGGRTLQIIRAKVSDGGEYTCIAINQAGESKKKFSLTVYVPPSIKDHDSESLSVVNVREGTSVSLECESNAVPPPVITWYKNGRMITESTHVEILADGQMLHIKKAEVSDTGQYVCRAINVAGRDDKNFHLNVYVPPSIEGPEREVIVETISNPVTLTCDATGIPPPTIAWLKNHKRIENSDSLEVRILSGGSKLQIARSQHSDSGNYTCIASNMEGKAQKYYFLSIQVPPSVAGAEIPSDVSVLLGENVELVCNANGIPTPLIQWLKDGKPIASGETERIRVSANGSTLNIYGALTSDTGKYTCVATNPAGEEDRIFNLNVYVTPTIRGNKDEAEKLMTLVDTSINIECRATGTPPPQINWLKNGLPLPLSSHIRLLAAGQVIRIVRAQVSDVAVYTCVASNRAGVDNKHYNLQVFAPPNMDNSMGTEEITVLKGSSTSMACITDGTPAPSMAWLRDGQPLGLDAHLTVSTHGMVLQLLKAETEDSGKYTCIASNEAGEVSKHFILKVLEPPHINGSEEHEEISVIVNNPLELTCIASGIPAPKMTWMKDGRPLPQTDQVQTLGGGEVLRISTAQVEDTGRYTCLASSPAGDDDKEYLVRVHVPPNIAGTDEPRDITVLRNRQVTLECKSDAVPPPVITWLRNGERLQATPRVRILSGGRYLQINNADLGDTANYTCVASNIAGKTTREFILTVNVPPNIKGGPQSLVILLNKSTVLECIAEGVPTPRITWRKDGAVLAGNHARYSILENGFLHIQSAHVTDTGRYLCMATNAAGTDRRRIDLQVHVPPSIAPGPTNMTVIVNVQTTLACEATGIPKPSINWRKNGHLLNVDQNQNSYRLLSSGSLVIISPSVDDTATYECTVTNGAGDDKRTVDLTVQVPPSIADEPTDFLVTKHAPAVITCTASGVPFPSIHWTKNGIRLLPRGDGYRILSSGAIEILATQLNHAGRYTCVARNAAGSAHRHVTLHVHEPPVIQPQPSELHVILNNPILLPCEATGTPSPFITWQKEGINVNTSGRNHAVLPSGGLQISRAVREDAGTYMCVAQNPAGTALGKIKLNVQVPPVISPHLKEYVIAVDKPITLSCEADGLPPPDITWHKDGRAIVESIRQRVLSSGSLQIAFVQPGDAGHYTCMAANVAGSSSTSTKLTVHVPPRIRSTEGHYTVNENSQAILPCVADGIPTPAINWKKDNVLLANLLGKYTAEPYGELILENVVLEDSGFYTCVANNAAGEDTHTVSLTVHVLPTFTELPGDVSLNKGEQLRLSCKATGIPLPKLTWTFNNNIIPAHFDSVNGHSELVIERVSKEDSGTYVCTAENSVGFVKAIGFVYVKEPPVFKGDYPSNWIEPLGGNAILNCEVKGDPTPTIQWNRKGVDIEISHRIRQLGNGSLAIYGTVNEDAGDYTCVATNEAGVVERSMSLTLQSPPIITLEPVETVINAGGKIILNCQATGEPQPTITWSRQGHSISWDDRVNVLSNNSLYIADAQKEDTSEFECVARNLMGSVLVRVPVIVQVHGGFSQWSAWRACSVTCGKGIQKRSRLCNQPLPANGGKPCQGSDLEMRNCQNKPCPVDGSWSEWSLWEECTRSCGRGNQTRTRTCNNPSVQHGGRPCEGNAVEIIMCNIRPCPVHGAWSAWQPWGTCSESCGKGTQTRARLCNNPPPAFGGSYCDGAETQMQVCNERNCPIHGKWATWASWSACSVSCGGGARQRTRGCSDPVPQYGGRKCEGSDVQSDFCNSDPCPTHGNWSPWSGWGTCSRTCNGGQMRRYRTCDNPPPSNGGRACGGPDSQIQRCNTDMCPVDGSWGSWHSWSQCSASCGGGEKTRKRLCDHPVPVKGGRPCPGDTTQVTRCNVQACPGGPQRARGSVIGNINDVEFGIAFLNATITDSPNSDTRIIRAKITNVPRSLGSAMRKIVSILNPIYWTTAKEIGEAVNGFTLTNAVFKRETQVEFATGEILQMSHIARGLDSDGSLLLDIVVSGYVLQLQSPAEVTVKDYTEDYIQTGPGQLYAYSTRLFTIDGISIPYTWNHTVFYDQAQGRMPFLVETLHASSVESDYNQIEETLGFKIHASISKGDRSNQCPSGFTLDSVGPFCADEDECAAGNPCSHSCHNAMGTYYCSCPKGLTIAADGRTCQDIDECALGRHTCHAGQDCDNTIGSYRCVVRCGSGFRRTSDGLSCQDINECQESSPCHQRCFNAIGSFHCGCEPGYQLKGRKCMDVNECRQNVCRPDQHCKNTRGGYKCIDLCPNGMTKAENGTCIDIDECKDGTHQCRYNQICENTRGSYRCVCPRGYRSQGVGRPCMDINECEQVPKPCAHQCSNTPGSFKCICPPGQHLLGDGKSCAGLERLPNYGTQYSSYNLARFSPVRNNYQPQQHYRQYSHLYSSYSEYRNSRTSLSRTRRTIRKTCPEGSEASHDTCVDIDECENTDACQHECKNTFGSYQCICPPGYQLTHNGKTCQDIDECLEQNVHCGPNRMCFNMRGSYQCIDTPCPPNYQRDPVSGFCLKNCPPNDLECALSPYALEYKLVSLPFGIATNQDLIRLVAYTQDGVMHPRTTFLMVDEEQTVPFALRDENLKGVVYTTRPLREAETYRMRVRASSYSANGTIEYQTTFIVYIAVSAYPY.

A signal peptide spans 1-21 (MISWEVVHTVFLFALLYSSLA). The VWFA domain occupies 41–216 (TLAFVFDVTG…EVLKWVEEAV (176 aa)). N-linked (GlcNAc...) asparagine glycosylation is found at Asn349 and Asn390. 44 Ig-like C2-type domains span residues 431 to 517 (PKVT…FDVS), 520 to 607 (PPVI…VFLT), 612 to 697 (PKVT…STLR), 702 to 788 (PKLM…ITLD), 793 to 883 (PVFI…TTVT), 890 to 976 (PLIG…TSVV), 981 to 1067 (PTIQ…VQLT), 1072 to 1166 (PRVF…VKLN), 1171 to 1255 (PKIQ…TEIT), 1262 to 1354 (PTVE…YNLK), 1358 to 1447 (PPVI…FNID), 1452 to 1541 (PTII…IKLT), 1546 to 1634 (PSIK…FHVD), 1638 to 1724 (PPMI…KEIK), 1733 to 1821 (PAIE…FEVT), 1826 to 1914 (PTIK…IQLH), 1919 to 2007 (PSLE…YSLQ), 2012 to 2097 (PSIS…RDID), 2104 to 2190 (PNIM…YNVN), 2195 to 2285 (PNIG…YNLQ), 2290 to 2379 (PTIT…YDLS), 2384 to 2470 (PSII…RKIF), 2478 to 2564 (PHIV…RSFS), 2571 to 2662 (PTIA…YEVK), 2666 to 2763 (PPII…VNIQ), 2766 to 2864 (PSFQ…YDVR), 2868 to 2959 (PPII…FNLN), 2964 to 3051 (PSVI…FSLT), 3056 to 3146 (PSIK…FHLN), 3151 to 3240 (PSIE…YFLS), 3245 to 3335 (PSVA…FNLN), 3340 to 3429 (PTIR…YNLQ), 3434 to 3516 (PNMD…GEVS), 3527 to 3615 (PHIN…YLVR), 3620 to 3708 (PNIA…FILT), 3713 to 3797 (PNIK…RRID), 3804 to 3892 (PSIA…VDLT), 3897 to 3983 (PSIA…VTLH), 3988 to 4076 (PVIQ…LNVQ), 4079 to 4164 (PVIS…TKLT), 4169 to 4255 (PRIR…VSLT), 4260 to 4344 (PTFT…GFVY), 4348 to 4435 (PPVF…MSLT), and 4440 to 4527 (PIIT…VIVQ). The cysteines at positions 451 and 499 are disulfide-linked. Residues Asn528, Asn550, Asn573, and Asn620 are each glycosylated (N-linked (GlcNAc...) asparagine). The cysteines at positions 541 and 591 are disulfide-linked. A disulfide bond links Cys633 and Cys681. A glycan (N-linked (GlcNAc...) asparagine) is linked at Asn693. The cysteines at positions 723 and 772 are disulfide-linked. Residue Asn809 is glycosylated (N-linked (GlcNAc...) asparagine). Disulfide bonds link Cys814/Cys867 and Cys911/Cys960. The N-linked (GlcNAc...) asparagine glycan is linked to Asn970. 2 disulfides stabilise this stretch: Cys1002/Cys1051 and Cys1101/Cys1150. Asn1158 carries N-linked (GlcNAc...) asparagine glycosylation. Cys1192 and Cys1241 are oxidised to a cystine. N-linked (GlcNAc...) asparagine glycosylation occurs at Asn1272. An intrachain disulfide couples Cys1288 to Cys1338. An N-linked (GlcNAc...) asparagine glycan is attached at Asn1369. 2 disulfides stabilise this stretch: Cys1382–Cys1431 and Cys1475–Cys1525. N-linked (GlcNAc...) asparagine glycosylation occurs at Asn1552. 4 cysteine pairs are disulfide-bonded: Cys1569–Cys1618, Cys1663–Cys1712, Cys1756–Cys1805, and Cys1848–Cys1898. Residue Asn1929 is glycosylated (N-linked (GlcNAc...) asparagine). 2 disulfides stabilise this stretch: Cys1942–Cys1991 and Cys2033–Cys2083. N-linked (GlcNAc...) asparagine glycans are attached at residues Asn2112 and Asn2155. Cystine bridges form between Cys2125-Cys2174, Cys2218-Cys2269, and Cys2314-Cys2363. A glycan (N-linked (GlcNAc...) asparagine) is linked at Asn2395. Intrachain disulfides connect Cys2408/Cys2457, Cys2501/Cys2550, and Cys2597/Cys2646. The N-linked (GlcNAc...) asparagine glycan is linked to Asn2689. Intrachain disulfides connect Cys2696–Cys2745 and Cys2799–Cys2848. Residue Asn2887 is glycosylated (N-linked (GlcNAc...) asparagine). Cys2894 and Cys2943 form a disulfide bridge. Asn2973 is a glycosylation site (N-linked (GlcNAc...) asparagine). 6 disulfides stabilise this stretch: Cys2986/Cys3035, Cys3081/Cys3130, Cys3173/Cys3224, Cys3268/Cys3319, Cys3364/Cys3413, and Cys3457/Cys3506. Residues Asn3221 and Asn3300 are each glycosylated (N-linked (GlcNAc...) asparagine). Residue Asn3530 is glycosylated (N-linked (GlcNAc...) asparagine). Cystine bridges form between Cys3550/Cys3599 and Cys3643/Cys3692. Asn3689 and Asn3727 each carry an N-linked (GlcNAc...) asparagine glycan. The cysteines at positions 3734 and 3783 are disulfide-linked. Residue Asn3812 is glycosylated (N-linked (GlcNAc...) asparagine). Cystine bridges form between Cys3825–Cys3876, Cys3918–Cys3967, Cys4009–Cys4058, Cys4100–Cys4148, Cys4190–Cys4239, Cys4281–Cys4328, Cys4371–Cys4419, Cys4461–Cys4509, Cys4541–Cys4578, Cys4545–Cys4583, Cys4556–Cys4568, Cys4598–Cys4635, Cys4602–Cys4640, Cys4613–Cys4625, Cys4655–Cys4692, Cys4659–Cys4697, Cys4670–Cys4682, Cys4712–Cys4749, Cys4716–Cys4754, Cys4727–Cys4739, Cys4769–Cys4806, Cys4773–Cys4811, Cys4784–Cys4796, Cys4826–Cys4863, Cys4830–Cys4868, and Cys4841–Cys4853. Asn4029 carries an N-linked (GlcNAc...) asparagine glycan. Residues Asn4401 and Asn4491 are each glycosylated (N-linked (GlcNAc...) asparagine). TSP type-1 domains are found at residues 4529–4584 (HGGF…KPCP), 4586–4641 (DGSW…RPCP), 4643–4698 (HGAW…RNCP), 4700–4755 (HGKW…DPCP), 4757–4812 (HGNW…DMCP), and 4814–4869 (DGSW…QACP). Residue Asn4606 is glycosylated (N-linked (GlcNAc...) asparagine). The region spanning 4871 to 5093 (GPQRARGSVI…SKGDRSNQCP (223 aa)) is the Nidogen G2 beta-barrel domain. N-linked (GlcNAc...) asparagine glycans are attached at residues Asn4894 and Asn5040. An EGF-like 1; calcium-binding domain is found at 5107–5146 (DEDECAAGNPCSHSCHNAMGTYYCSCPKGLTIAADGRTCQ). 3 cysteine pairs are disulfide-bonded: Cys5111/Cys5121, Cys5117/Cys5130, and Cys5132/Cys5145. The EGF-like 2; calcium-binding domain occupies 5147-5191 (DIDECALGRHTCHAGQDCDNTIGSYRCVVRCGSGFRRTSDGLSCQ). Residues 5192-5229 (DINECQESSPCHQRCFNAIGSFHCGCEPGYQLKGRKCM) form the EGF-like 3; calcium-binding domain. Intrachain disulfides connect Cys5196–Cys5206, Cys5202–Cys5215, and Cys5217–Cys5228. Positions 5230-5271 (DVNECRQNVCRPDQHCKNTRGGYKCIDLCPNGMTKAENGTCI) constitute an EGF-like 4; calcium-binding domain. An N-linked (GlcNAc...) asparagine glycan is attached at Asn5267. An EGF-like 5; calcium-binding domain is found at 5272-5307 (DIDECKDGTHQCRYNQICENTRGSYRCVCPRGYRSQ). 8 disulfide bridges follow: Cys5276–Cys5289, Cys5283–Cys5298, Cys5319–Cys5330, Cys5326–Cys5339, Cys5341–Cys5354, Cys5436–Cys5446, Cys5442–Cys5455, and Cys5457–Cys5470. Positions 5315 to 5355 (DINECEQVPKPCAHQCSNTPGSFKCICPPGQHLLGDGKSCA) constitute an EGF-like 6; calcium-binding domain. Positions 5432-5471 (DIDECENTDACQHECKNTFGSYQCICPPGYQLTHNGKTCQ) constitute an EGF-like 7; calcium-binding domain. An N-linked (GlcNAc...) asparagine glycan is attached at Asn5615.

As to expression, expressed in hair follicles and in the dermis (at protein level). In terms of tissue distribution, expressed in skin fibroblasts and retinal pigment epithelium (RPE) cells.

It is found in the secreted. The protein resides in the extracellular space. It localises to the extracellular matrix. Its subcellular location is the basement membrane. The protein localises to the cytoplasm. It is found in the cell junction. The protein resides in the cleavage furrow. Its function is as follows. Involved in transforming growth factor beta-mediated rearrangement of the podocyte cytoskeleton which includes reduction of F-actin fibers and broadening, flattening and elongation of podocytes. Plays a role in basement membrane organization. May promote cleavage furrow maturation during cytokinesis in preimplantation embryos. May play a role in the architecture of adhesive and flexible epithelial cell junctions. May play a role during myocardial remodeling by imparting an effect on cardiac fibroblast migration. The protein is Hemicentin-1 (HMCN1) of Homo sapiens (Human).